The sequence spans 396 residues: MAKAKFERTKPHVNIGTIGHVDHGKTTLTAAITKVLHDQYPDLNESRAFDQIDNAPEERQRGITINISHVEYQTEKRHYAHVDAPGHADYIKNMITGAAQMDGAILVVAATDGPMPQTREHVLLARQVGVPYILVALNKADMVDDEELIELVEMEVRELLAAQDFDEDAPVVKVSALKALEGDEKWVKSVQELMAAVDESIPDPVRETDKPFLMPVEDVFTITGRGTVVTGRVERGVINVNEEVEIVGIRPTVTKTTVTGVEMFRKLLDQGQAGDNVGLLVRGIKREDVERGQVVVKPGTTTPHTEFEGSVYILSKDEGGRHTPFFNNYRPQFYFRTTDVTGVVTLPEGTEMVMPGDNTDIAVKLIQPVAMDEGLRFAIREGGRTVGAGRVTKIIK.

In terms of domain architecture, tr-type G spans 10–205 (KPHVNIGTIG…AVDESIPDPV (196 aa)). The interval 19-26 (GHVDHGKT) is G1. 19-26 (GHVDHGKT) provides a ligand contact to GTP. T26 is a binding site for Mg(2+). The segment at 62–66 (GITIN) is G2. The tract at residues 83–86 (DAPG) is G3. GTP-binding positions include 83-87 (DAPGH) and 138-141 (NKAD). The tract at residues 138–141 (NKAD) is G4. Residues 175-177 (SAL) form a G5 region.

It belongs to the TRAFAC class translation factor GTPase superfamily. Classic translation factor GTPase family. EF-Tu/EF-1A subfamily. As to quaternary structure, monomer.

The protein localises to the cytoplasm. The enzyme catalyses GTP + H2O = GDP + phosphate + H(+). Functionally, GTP hydrolase that promotes the GTP-dependent binding of aminoacyl-tRNA to the A-site of ribosomes during protein biosynthesis. The polypeptide is Elongation factor Tu (Mycolicibacterium gilvum (strain PYR-GCK) (Mycobacterium gilvum (strain PYR-GCK))).